We begin with the raw amino-acid sequence, 80 residues long: Bacteriochlorophyll c-binding protein (80 aa).

His-25 serves as a coordination point for a bacteriochlorophyll c. The interval 49–80 is disordered; it reads PGVSRSGSGEGAFSSSPSNGFRPKRIRSRFNR. A propeptide spanning residues 54-80 is cleaved from the precursor; the sequence is SGSGEGAFSSSPSNGFRPKRIRSRFNR. A compositionally biased stretch (basic residues) spans 70–80; the sequence is RPKRIRSRFNR.

It belongs to the BChl C/E-binding protein family.

It is found in the chlorosome. The protein resides in the chlorosome envelope. Functionally, component of the photosynthetic apparatus. The light harvesting B740 complex binds bacteriochlorophyll c. This Chloroflexus aurantiacus (strain ATCC 29366 / DSM 635 / J-10-fl) protein is Bacteriochlorophyll c-binding protein (cmsA).